A 425-amino-acid chain; its full sequence is Dihydroorotase (425 aa).

Zn(2+) contacts are provided by H59 and H61. Residues 61–63 (HLR) and N93 contribute to the substrate site. Zn(2+) is bound by residues D151, H178, and H231. N277 is a substrate binding site. D304 provides a ligand contact to Zn(2+). The active site involves D304. Substrate-binding positions include H308 and 322 to 323 (FG).

It belongs to the metallo-dependent hydrolases superfamily. DHOase family. Class I DHOase subfamily. Zn(2+) serves as cofactor.

The enzyme catalyses (S)-dihydroorotate + H2O = N-carbamoyl-L-aspartate + H(+). Its pathway is pyrimidine metabolism; UMP biosynthesis via de novo pathway; (S)-dihydroorotate from bicarbonate: step 3/3. Its function is as follows. Catalyzes the reversible cyclization of carbamoyl aspartate to dihydroorotate. The sequence is that of Dihydroorotase from Staphylococcus epidermidis (strain ATCC 12228 / FDA PCI 1200).